Reading from the N-terminus, the 445-residue chain is Exodeoxyribonuclease 7 large subunit (445 aa).

It belongs to the XseA family. In terms of assembly, heterooligomer composed of large and small subunits.

The protein localises to the cytoplasm. The catalysed reaction is Exonucleolytic cleavage in either 5'- to 3'- or 3'- to 5'-direction to yield nucleoside 5'-phosphates.. Its function is as follows. Bidirectionally degrades single-stranded DNA into large acid-insoluble oligonucleotides, which are then degraded further into small acid-soluble oligonucleotides. In Xanthomonas euvesicatoria pv. vesicatoria (strain 85-10) (Xanthomonas campestris pv. vesicatoria), this protein is Exodeoxyribonuclease 7 large subunit.